A 213-amino-acid chain; its full sequence is Orotate phosphoribosyltransferase (213 aa).

Residue K26 participates in 5-phospho-alpha-D-ribose 1-diphosphate binding. 34 to 35 (FF) contributes to the orotate binding site. Residues 72-73 (YK), R99, K100, K103, H105, and 124-132 (DDVITAGTA) contribute to the 5-phospho-alpha-D-ribose 1-diphosphate site. Orotate contacts are provided by T128 and R156.

Belongs to the purine/pyrimidine phosphoribosyltransferase family. PyrE subfamily. Homodimer. Mg(2+) serves as cofactor.

The catalysed reaction is orotidine 5'-phosphate + diphosphate = orotate + 5-phospho-alpha-D-ribose 1-diphosphate. It participates in pyrimidine metabolism; UMP biosynthesis via de novo pathway; UMP from orotate: step 1/2. Functionally, catalyzes the transfer of a ribosyl phosphate group from 5-phosphoribose 1-diphosphate to orotate, leading to the formation of orotidine monophosphate (OMP). This Vibrio vulnificus (strain YJ016) protein is Orotate phosphoribosyltransferase.